The following is a 501-amino-acid chain: Phenylalanine--tRNA ligase alpha subunit (501 aa).

L-phenylalanine-binding positions include Thr344, 383-385 (QID), and Phe424. Residue Glu426 coordinates Mg(2+). Phe449 serves as a coordination point for L-phenylalanine.

It belongs to the class-II aminoacyl-tRNA synthetase family. Phe-tRNA synthetase alpha subunit type 2 subfamily. Tetramer of two alpha and two beta subunits. Requires Mg(2+) as cofactor.

Its subcellular location is the cytoplasm. The catalysed reaction is tRNA(Phe) + L-phenylalanine + ATP = L-phenylalanyl-tRNA(Phe) + AMP + diphosphate + H(+). This chain is Phenylalanine--tRNA ligase alpha subunit, found in Thermococcus kodakarensis (strain ATCC BAA-918 / JCM 12380 / KOD1) (Pyrococcus kodakaraensis (strain KOD1)).